The following is a 119-amino-acid chain: C-C motif chemokine 24 (119 aa).

The signal sequence occupies residues M1–S26. Cystine bridges form between C33–C58 and C34–C74. 2 N-linked (GlcNAc...) asparagine glycosylation sites follow: N54 and N115. The segment at P96 to V119 is disordered. Basic residues predominate over residues K101 to V119.

It belongs to the intercrine beta (chemokine CC) family. As to expression, highest expression in jejunum and spleen. Lower levels found in liver and lung. No expression detected in kidney, thymus, brain or testis.

It localises to the secreted. Functionally, chemotactic for resting T-lymphocytes, and eosinophils. Has lower chemotactic activity for neutrophils but none for monocytes and activated lymphocytes. Is a strong suppressor of colony formation by a multipotential hematopoietic progenitor cell line. Binds to CCR3. In Mus musculus (Mouse), this protein is C-C motif chemokine 24.